Consider the following 498-residue polypeptide: Cytochrome P450 monooxygenase 110 (498 aa).

The helical transmembrane segment at 7–24 (YVFALLGILATLYFVRWS) threads the bilayer. N-linked (GlcNAc...) asparagine glycosylation is present at Asn-425. Cys-440 contacts heme.

The protein belongs to the cytochrome P450 family. It depends on heme as a cofactor.

The protein localises to the membrane. It functions in the pathway secondary metabolite biosynthesis. Functionally, cytochrome P450 monooxygenase that is able to use dehydroabietic acid and testosterone as substrates for oxidation, suggesting that the natural substrate(s) may be structurally related to steroid compounds. This is Cytochrome P450 monooxygenase 110 from Postia placenta (strain ATCC 44394 / Madison 698-R) (Brown rot fungus).